A 135-amino-acid polypeptide reads, in one-letter code: Ribonuclease VapC9 (135 aa).

Residues 15–118 (VVDTNVLMYV…LKRKAKQRGI (104 aa)) form the PINc domain. The Mg(2+) site is built by Asp17 and Asp88.

This sequence belongs to the PINc/VapC protein family. As to quaternary structure, dimer. It depends on Mg(2+) as a cofactor.

Toxic component of a type II toxin-antitoxin (TA) system. An RNase. This Archaeoglobus fulgidus (strain ATCC 49558 / DSM 4304 / JCM 9628 / NBRC 100126 / VC-16) protein is Ribonuclease VapC9.